A 231-amino-acid chain; its full sequence is Putative N-acetylmannosamine-6-phosphate 2-epimerase (231 aa).

This sequence belongs to the NanE family.

It carries out the reaction an N-acyl-D-glucosamine 6-phosphate = an N-acyl-D-mannosamine 6-phosphate. It functions in the pathway amino-sugar metabolism; N-acetylneuraminate degradation; D-fructose 6-phosphate from N-acetylneuraminate: step 3/5. Its function is as follows. Converts N-acetylmannosamine-6-phosphate (ManNAc-6-P) to N-acetylglucosamine-6-phosphate (GlcNAc-6-P). The polypeptide is Putative N-acetylmannosamine-6-phosphate 2-epimerase (Listeria monocytogenes serotype 4b (strain CLIP80459)).